The primary structure comprises 412 residues: Serine hydroxymethyltransferase (412 aa).

(6S)-5,6,7,8-tetrahydrofolate contacts are provided by residues leucine 119 and 123-125 (GHL). Residue lysine 228 is modified to N6-(pyridoxal phosphate)lysine.

This sequence belongs to the SHMT family. Homodimer. The cofactor is pyridoxal 5'-phosphate.

It localises to the cytoplasm. It catalyses the reaction (6R)-5,10-methylene-5,6,7,8-tetrahydrofolate + glycine + H2O = (6S)-5,6,7,8-tetrahydrofolate + L-serine. It functions in the pathway one-carbon metabolism; tetrahydrofolate interconversion. The protein operates within amino-acid biosynthesis; glycine biosynthesis; glycine from L-serine: step 1/1. Catalyzes the reversible interconversion of serine and glycine with tetrahydrofolate (THF) serving as the one-carbon carrier. This reaction serves as the major source of one-carbon groups required for the biosynthesis of purines, thymidylate, methionine, and other important biomolecules. Also exhibits THF-independent aldolase activity toward beta-hydroxyamino acids, producing glycine and aldehydes, via a retro-aldol mechanism. The protein is Serine hydroxymethyltransferase of Thermodesulfovibrio yellowstonii (strain ATCC 51303 / DSM 11347 / YP87).